The primary structure comprises 181 residues: uncharacterized protein (181 aa).

The disordered stretch occupies residues 151–181 (AQKKKDFQEPENKHEQLTSTKAPCQENWSDF). The span at 154–166 (KKDFQEPENKHEQ) shows a compositional bias: basic and acidic residues. The span at 167–181 (LTSTKAPCQENWSDF) shows a compositional bias: polar residues.

This is an uncharacterized protein from Caenorhabditis elegans.